The chain runs to 226 residues: Neuron-specific vesicular protein calcyon (226 aa).

Positions 1 to 23 (MVKLGCSFSGKPGKETGDQDGAA) are disordered. The Extracellular segment spans residues 1–88 (MVKLGCSFSG…EEGRRLPTAR (88 aa)). The helical transmembrane segment at 89-109 (MIAFAMALLGCVLIMYKAIWY) threads the bilayer. Residues 110 to 226 (DQFTCPDGFL…AEDVPSQSPK (117 aa)) are Cytoplasmic-facing. Residues 189-226 (TAAAAAAAEGNEPSGKPLDMREKEDPQKAEDVPSQSPK) form a disordered region. A compositionally biased stretch (basic and acidic residues) spans 206 to 219 (LDMREKEDPQKAED).

It belongs to the NSG family. Interacts with CLTA. In terms of tissue distribution, expressed exclusively in neurons (at protein level). In all age groups, expressed at significantly higher levels in the medial prefrontal and orbital frontal cortices of spontaneously hypertensive rats (SHR), a model of attention deficit-hyperactivity disorder, than Wistar Kyoto (WKY) animals. In the motor cortex, dorsal striatum and nucleus accumbens, expression is significantly elevated in SHR only in younger animals.

It is found in the cytoplasmic vesicle membrane. The protein localises to the cell membrane. Interacts with clathrin light chain A and stimulates clathrin self-assembly and clathrin-mediated endocytosis. The chain is Neuron-specific vesicular protein calcyon (Caly) from Rattus norvegicus (Rat).